A 309-amino-acid chain; its full sequence is Probable MRF1 mitochondrial N(5)-glutamine methyltransferase mtq1 (309 aa).

S-adenosyl-L-methionine-binding positions include 124 to 128 (CTGSG), D148, and N200. 200–203 (NPPY) contacts substrate.

This sequence belongs to the protein N5-glutamine methyltransferase family.

Its subcellular location is the mitochondrion. The enzyme catalyses L-glutaminyl-[peptide chain release factor] + S-adenosyl-L-methionine = N(5)-methyl-L-glutaminyl-[peptide chain release factor] + S-adenosyl-L-homocysteine + H(+). Its function is as follows. Methylates MRF1 on 'Gln-270' using S-adenosyl L-methionine as methyl donor. This chain is Probable MRF1 mitochondrial N(5)-glutamine methyltransferase mtq1 (mtq1), found in Schizosaccharomyces pombe (strain 972 / ATCC 24843) (Fission yeast).